The chain runs to 89 residues: Three-finger toxin 3 (89 aa).

The N-terminal stretch at 1 to 16 (MKTLLLILGVVAFVYL) is a signal peptide. 4 disulfide bridges follow: C24–C47, C40–C66, C70–C81, and C82–C87.

The protein belongs to the three-finger toxin family. Ancestral subfamily. Expressed by the venom gland.

The protein localises to the secreted. In Sistrurus catenatus edwardsii (Desert massasauga), this protein is Three-finger toxin 3.